Consider the following 595-residue polypeptide: uncharacterized protein (595 aa).

Disordered regions lie at residues 50 to 159 (VNPS…KTKK), 398 to 430 (TYPT…PPSL), and 450 to 595 (VTEG…SLDK). The span at 83-122 (SNKSSALKKSNKSSNKSSNKSSNKSSNKSSNKSSNKSSNK) shows a compositional bias: low complexity. Residues 123 to 132 (FPDKSDKSDS) are compositionally biased toward basic and acidic residues. Residues 137 to 146 (DNSDDSDDSS) show a composition bias toward acidic residues. A compositionally biased stretch (low complexity) spans 398 to 409 (TYPTTPLFSEPT). A compositionally biased stretch (pro residues) spans 410 to 420 (IPKPPQQPTTE). Positions 421-430 (PPSGFKPPSL) are enriched in low complexity. Basic and acidic residues predominate over residues 454–463 (KVVESDDHTS). Pro residues predominate over residues 467–476 (IPPPPPPPPS). Positions 477–529 (ISSDNSSPNKSVKSSTKSSTKSSTKSSTKSSTKSSTKSPSKTPVKSPIKSSSK) are enriched in low complexity. A compositionally biased stretch (basic and acidic residues) spans 530–542 (LSDKKSPTKKIES). Residues 544–553 (GESDSESDSE) show a composition bias toward acidic residues. Residues 559–570 (TKKSTNKIKKIT) show a composition bias toward basic residues. Positions 571–580 (NNKLENSNTK) are enriched in low complexity. A compositionally biased stretch (basic residues) spans 581–595 (NNKKFSKKKTISLDK).

This is an uncharacterized protein from Acanthamoeba polyphaga mimivirus (APMV).